The primary structure comprises 431 residues: D-inositol 3-phosphate glycosyltransferase (431 aa).

H14 contacts 1D-myo-inositol 3-phosphate. UDP-N-acetyl-alpha-D-glucosamine-binding positions include 20-21 (QP) and G28. 1D-myo-inositol 3-phosphate is bound by residues 25-30 (DAGGMN), K83, Y116, T140, and R160. Positions 240 and 245 each coordinate UDP-N-acetyl-alpha-D-glucosamine. Residues Y315, R316, and A318 each coordinate Mg(2+). UDP-N-acetyl-alpha-D-glucosamine-binding residues include E328 and E336. T342 is a binding site for Mg(2+).

This sequence belongs to the glycosyltransferase group 1 family. MshA subfamily. In terms of assembly, homodimer.

The catalysed reaction is 1D-myo-inositol 3-phosphate + UDP-N-acetyl-alpha-D-glucosamine = 1D-myo-inositol 2-acetamido-2-deoxy-alpha-D-glucopyranoside 3-phosphate + UDP + H(+). In terms of biological role, catalyzes the transfer of a N-acetyl-glucosamine moiety to 1D-myo-inositol 3-phosphate to produce 1D-myo-inositol 2-acetamido-2-deoxy-glucopyranoside 3-phosphate in the mycothiol biosynthesis pathway. The protein is D-inositol 3-phosphate glycosyltransferase of Thermomonospora curvata (strain ATCC 19995 / DSM 43183 / JCM 3096 / KCTC 9072 / NBRC 15933 / NCIMB 10081 / Henssen B9).